Reading from the N-terminus, the 314-residue chain is uncharacterized protein (314 aa).

The HTH araC/xylS-type domain maps to 192-289 (TEVKLHIKDN…GSSPGLFRSL (98 aa)). 2 consecutive DNA-binding regions (H-T-H motif) follow at residues 209–230 (TDVA…AAEL) and 257–279 (IKEI…SAKI).

This is an uncharacterized protein from Bacillus subtilis (strain 168).